The sequence spans 194 residues: Type II restriction enzyme OkrAI (194 aa).

Mg(2+)-binding residues include Glu-71, Asp-86, and Trp-100. The Proton acceptor role is filled by Glu-101.

In terms of assembly, homodimer. Mg(2+) serves as cofactor.

It carries out the reaction Endonucleolytic cleavage of DNA to give specific double-stranded fragments with terminal 5'-phosphates.. In terms of biological role, a P subtype restriction enzyme that recognizes the double-stranded sequence 5'-GGATCC-3' and cleaves after G-1. The sequence is that of Type II restriction enzyme OkrAI from Oceanobacter kriegii (Oceanospirillum kriegii).